A 215-amino-acid chain; its full sequence is ATP phosphoribosyltransferase (215 aa).

Belongs to the ATP phosphoribosyltransferase family. Short subfamily. As to quaternary structure, heteromultimer composed of HisG and HisZ subunits.

Its subcellular location is the cytoplasm. It carries out the reaction 1-(5-phospho-beta-D-ribosyl)-ATP + diphosphate = 5-phospho-alpha-D-ribose 1-diphosphate + ATP. It participates in amino-acid biosynthesis; L-histidine biosynthesis; L-histidine from 5-phospho-alpha-D-ribose 1-diphosphate: step 1/9. In terms of biological role, catalyzes the condensation of ATP and 5-phosphoribose 1-diphosphate to form N'-(5'-phosphoribosyl)-ATP (PR-ATP). Has a crucial role in the pathway because the rate of histidine biosynthesis seems to be controlled primarily by regulation of HisG enzymatic activity. The sequence is that of ATP phosphoribosyltransferase from Prochlorococcus marinus subsp. pastoris (strain CCMP1986 / NIES-2087 / MED4).